Here is a 96-residue protein sequence, read N- to C-terminus: Maintenance of carboxysome distribution protein B (96 aa).

Residues 1 to 18 show a composition bias toward basic and acidic residues; it reads MTNLEDKLSASIKTENKD. The segment at 1-96 is disordered; it reads MTNLEDKLSA…STHPRRVWPD (96 aa). Over residues 59–74 the composition is skewed to low complexity; the sequence is ARATTTKPAVSKSSKP.

In terms of assembly, monomer, associates with McdA:DNA. Interacts with shell components of the carboxysome.

The protein localises to the carboxysome. McdA and McdB together mediate carboxysome positioning on the nucleoid and to prevent their aggregation in the cell. Undergoes liquid-liquid phase separation at pH 7.0 in the presence of crowders polyethylene glycol or Ficoll. McdA is an ATPase that forms dynamic gradients on the nucleoid in response to adapter protein McdB, which associates with carboxysomes. The interplay between McdA gradients on the nucleoid and McdB-bound carboxysomes result in the equal spacing of Cbs along the cell length. Stimulates the ATPase activity of McdA, causing McdA to be released from DNA. In terms of biological role, incorrect positioning (aggregation) of carboxysomes results in reduced CO(2) fixation by encapsulated form 1 ribulose-1,5-bisphosphate carboxylase (RuBisCO, cbbL/cbbS), which leads to slower growth. This Halothiobacillus neapolitanus (strain ATCC 23641 / c2) (Thiobacillus neapolitanus) protein is Maintenance of carboxysome distribution protein B.